The sequence spans 327 residues: DNA-directed RNA polymerase subunit alpha (327 aa).

The alpha N-terminal domain (alpha-NTD) stretch occupies residues Met1 to Ser231. An alpha C-terminal domain (alpha-CTD) region spans residues Asp247 to Lys327.

Belongs to the RNA polymerase alpha chain family. As to quaternary structure, homodimer. The RNAP catalytic core consists of 2 alpha, 1 beta, 1 beta' and 1 omega subunit. When a sigma factor is associated with the core the holoenzyme is formed, which can initiate transcription.

It catalyses the reaction RNA(n) + a ribonucleoside 5'-triphosphate = RNA(n+1) + diphosphate. Its function is as follows. DNA-dependent RNA polymerase catalyzes the transcription of DNA into RNA using the four ribonucleoside triphosphates as substrates. The polypeptide is DNA-directed RNA polymerase subunit alpha (Chlorobium chlorochromatii (strain CaD3)).